A 408-amino-acid chain; its full sequence is Secreted mono- and diacylglycerol lipase 2 (408 aa).

A signal peptide spans 1–24; that stretch reads MRFKLADSLSLITVQLILATSTLA. N-linked (GlcNAc...) asparagine glycosylation is present at asparagine 177. Catalysis depends on serine 217, which acts as the Nucleophile. Residues aspartate 283 and histidine 374 contribute to the active site.

Belongs to the AB hydrolase superfamily. Lipase family. Class 3 subfamily.

The protein localises to the secreted. It catalyses the reaction a monoacylglycerol + H2O = glycerol + a fatty acid + H(+). The enzyme catalyses a diacylglycerol + H2O = a monoacylglycerol + a fatty acid + H(+). Secreted mono- and diacylglycerol lipase involved in plant virulence. Has a substrate preference for p-nitrophenyl esters with a carbon chain length of C10 (p-nitrophenyl caprate). This chain is Secreted mono- and diacylglycerol lipase 2, found in Gibberella zeae (strain ATCC MYA-4620 / CBS 123657 / FGSC 9075 / NRRL 31084 / PH-1) (Wheat head blight fungus).